The chain runs to 195 residues: MKKYLFVALAALVLTGCLSRPPEPEQPQPPVTVEPVTPPVVEEPQPPVTEPVPQPPKIQQLDWLSSVQPLVNQMLKADGVNPGSVLLLDSVKNNTNGSLQTAKATSALHKALASNQTFSIVPEAQLATAKQTLGLSADDSLGSRSKAIGLARIVSAQYVLYSDVSGDVKSPTLDMQLMLVQSGEIVWSGNGAVTH.

An N-terminal signal peptide occupies residues 1 to 16; sequence MKKYLFVALAALVLTG. The N-palmitoyl cysteine moiety is linked to residue cysteine 17. A lipid anchor (S-diacylglycerol cysteine) is attached at cysteine 17. The interval 19–55 is disordered; sequence SRPPEPEQPQPPVTVEPVTPPVVEEPQPPVTEPVPQP. Composition is skewed to pro residues over residues 24–38 and 44–55; these read PEQP…PVTP and PQPPVTEPVPQP.

This sequence belongs to the LpoB family. As to quaternary structure, interacts with PBP1b.

It localises to the cell outer membrane. Its function is as follows. Regulator of peptidoglycan synthesis that is essential for the function of penicillin-binding protein 1B (PBP1b). The polypeptide is Penicillin-binding protein activator LpoB (Serratia proteamaculans (strain 568)).